The following is a 250-amino-acid chain: 2-(R)-hydroxypropyl-CoM dehydrogenase (250 aa).

NAD(+) contacts are provided by residues 12–14 (SGN), D33, 60–61 (DV), and N87. Residue R152 coordinates 2-oxopropyl-coenzyme M. Y155 acts as the Proton acceptor in catalysis. Residue 188 to 192 (IETPM) participates in NAD(+) binding. 195 to 196 (WR) provides a ligand contact to 2-oxopropyl-coenzyme M.

The protein belongs to the short-chain dehydrogenases/reductases (SDR) family. In terms of assembly, homodimer in solution. Homotetramer. Component III of the aliphatic epoxide carboxylation complex together with components I, II and IV.

It carries out the reaction (R)-2-hydroxypropyl-coenzyme M + NAD(+) = 2-oxopropyl-coenzyme M + NADH + H(+). It functions in the pathway alkene metabolism; propylene degradation. Inhibited by the arginine-specific modifiers 2,3-butanedione and phenylglyoxal. 2-(2-methyl-2-hydroxypropylthio)ethanesulfonate (M-HPC), an achiral analog of both R-HPC and S-HPC, and (2S)-2-hydroxypropyl-coenzyme M (S-HPC) are competitive inhibitors. Inhibited (at 70%) by the coenzyme M analog 2-bromoethanesulfonate (BES). In terms of biological role, involved in aliphatic epoxide carboxylation. Catalyzes the reversible oxidation of (R)-2-hydroxypropyl-coenzyme M (R-HPC) to 2-oxopropyl-coenzyme M (2-KPC). The enzyme is highly specific for the R enantiomers. In vitro can also use achiral 2-propanol and short-chain (R)- and (S)-2-alkanols. In Xanthobacter autotrophicus (strain ATCC BAA-1158 / Py2), this protein is 2-(R)-hydroxypropyl-CoM dehydrogenase.